A 271-amino-acid chain; its full sequence is Dermonecrotic toxin SpeSicTox-betaIF1 (271 aa).

The active site involves histidine 3. Glutamate 23 and aspartate 25 together coordinate Mg(2+). Histidine 39 acts as the Nucleophile in catalysis. Disulfide bonds link cysteine 43–cysteine 49 and cysteine 45–cysteine 188. Aspartate 83 is a binding site for Mg(2+).

It belongs to the arthropod phospholipase D family. Class II subfamily. Requires Mg(2+) as cofactor. Expressed by the venom gland.

Its subcellular location is the secreted. The enzyme catalyses an N-(acyl)-sphingosylphosphocholine = an N-(acyl)-sphingosyl-1,3-cyclic phosphate + choline. It carries out the reaction an N-(acyl)-sphingosylphosphoethanolamine = an N-(acyl)-sphingosyl-1,3-cyclic phosphate + ethanolamine. It catalyses the reaction a 1-acyl-sn-glycero-3-phosphocholine = a 1-acyl-sn-glycero-2,3-cyclic phosphate + choline. The catalysed reaction is a 1-acyl-sn-glycero-3-phosphoethanolamine = a 1-acyl-sn-glycero-2,3-cyclic phosphate + ethanolamine. Its function is as follows. Dermonecrotic toxins cleave the phosphodiester linkage between the phosphate and headgroup of certain phospholipids (sphingolipid and lysolipid substrates), forming an alcohol (often choline) and a cyclic phosphate. This toxin acts on sphingomyelin (SM). It may also act on ceramide phosphoethanolamine (CPE), lysophosphatidylcholine (LPC) and lysophosphatidylethanolamine (LPE), but not on lysophosphatidylserine (LPS), and lysophosphatidylglycerol (LPG). It acts by transphosphatidylation, releasing exclusively cyclic phosphate products as second products. Induces dermonecrosis, hemolysis, increased vascular permeability, edema, inflammatory response, and platelet aggregation. This Sicarius peruensis (Six-eyed sand spider) protein is Dermonecrotic toxin SpeSicTox-betaIF1.